Here is a 1070-residue protein sequence, read N- to C-terminus: Carbamoyl phosphate synthase large chain (1070 aa).

Residues 1–401 (MPKRDDIKTI…ALLKAVRSLE (401 aa)) are carboxyphosphate synthetic domain. Arg129, Arg169, Gly175, Gly176, Lys208, Ile210, Glu215, Gly241, Ile242, His243, Gln284, and Glu298 together coordinate ATP. An ATP-grasp 1 domain is found at 133 to 327 (RDLMNELGEP…IAKLAAKIAV (195 aa)). Positions 284, 298, and 300 each coordinate Mg(2+). Gln284, Glu298, and Asn300 together coordinate Mn(2+). Residues 402-546 (IGADHLLLEE…YSTYEDENES (145 aa)) form an oligomerization domain region. A carbamoyl phosphate synthetic domain region spans residues 547–929 (IRSSKESVIV…ALYKGFVASG (383 aa)). The ATP-grasp 2 domain maps to 671 to 861 (EKALEILQIP…MANVATRVIL (191 aa)). 10 residues coordinate ATP: Arg707, Arg746, Val748, Glu752, Gly777, Val778, His779, Ser780, Gln820, and Glu832. 3 residues coordinate Mg(2+): Gln820, Glu832, and Asn834. Positions 820, 832, and 834 each coordinate Mn(2+). An MGS-like domain is found at 930–1070 (TTMHDYGTVL…SEVKQPKARV (141 aa)). The tract at residues 930-1070 (TTMHDYGTVL…SEVKQPKARV (141 aa)) is allosteric domain.

The protein belongs to the CarB family. As to quaternary structure, composed of two chains; the small (or glutamine) chain promotes the hydrolysis of glutamine to ammonia, which is used by the large (or ammonia) chain to synthesize carbamoyl phosphate. Tetramer of heterodimers (alpha,beta)4. It depends on Mg(2+) as a cofactor. Mn(2+) serves as cofactor.

The enzyme catalyses hydrogencarbonate + L-glutamine + 2 ATP + H2O = carbamoyl phosphate + L-glutamate + 2 ADP + phosphate + 2 H(+). It catalyses the reaction hydrogencarbonate + NH4(+) + 2 ATP = carbamoyl phosphate + 2 ADP + phosphate + 2 H(+). It participates in amino-acid biosynthesis; L-arginine biosynthesis; carbamoyl phosphate from bicarbonate: step 1/1. It functions in the pathway pyrimidine metabolism; UMP biosynthesis via de novo pathway; (S)-dihydroorotate from bicarbonate: step 1/3. Large subunit of the glutamine-dependent carbamoyl phosphate synthetase (CPSase). CPSase catalyzes the formation of carbamoyl phosphate from the ammonia moiety of glutamine, carbonate, and phosphate donated by ATP, constituting the first step of 2 biosynthetic pathways, one leading to arginine and/or urea and the other to pyrimidine nucleotides. The large subunit (synthetase) binds the substrates ammonia (free or transferred from glutamine from the small subunit), hydrogencarbonate and ATP and carries out an ATP-coupled ligase reaction, activating hydrogencarbonate by forming carboxy phosphate which reacts with ammonia to form carbamoyl phosphate. This is Carbamoyl phosphate synthase large chain from Listeria innocua serovar 6a (strain ATCC BAA-680 / CLIP 11262).